The chain runs to 369 residues: MWIKNISLKHYRNYEEAQVDFSPNLNIFIGRNAQGKTNFLEAIYFLALTRSHRTRSDKELVHFKHHDVQITGEVIRKSGHLNLDIQLSEKGRITKVNHLKQAKLSDYIGAMTVVLFAPEDLQLVKGAPSLRRKFLDIDIGQIKPTYLAELSNYNHVLKQRNTYLKTTNNVDKTFLTVLDEQLADYGSRVIEHRFDFIQALNDEADKHHYIISTELEHLSIHYKSSIEFTDKSSIREHFLNQLSKSHSRDIFKKNTSIGPHRDDITFFINDINATFASQGQQRSLILSLKLAEIELIKTVTNDYPILLLDDVMSELDNHRQLKLLEGIKENVQTFITTTSLEHLSALPDQLKIFNVSDGTISINEKKATD.

30–37 (GRNAQGKT) lines the ATP pocket.

The protein belongs to the RecF family.

It is found in the cytoplasm. The RecF protein is involved in DNA metabolism; it is required for DNA replication and normal SOS inducibility. RecF binds preferentially to single-stranded, linear DNA. It also seems to bind ATP. In Streptococcus agalactiae serotype III (strain NEM316), this protein is DNA replication and repair protein RecF.